Consider the following 130-residue polypeptide: Small ribosomal subunit protein uS11 (130 aa).

The protein belongs to the universal ribosomal protein uS11 family. In terms of assembly, part of the 30S ribosomal subunit. Interacts with proteins S7 and S18. Binds to IF-3.

Functionally, located on the platform of the 30S subunit, it bridges several disparate RNA helices of the 16S rRNA. Forms part of the Shine-Dalgarno cleft in the 70S ribosome. The sequence is that of Small ribosomal subunit protein uS11 from Shewanella frigidimarina (strain NCIMB 400).